A 491-amino-acid chain; its full sequence is Chromosomal replication initiator protein DnaA (491 aa).

The domain I, interacts with DnaA modulators stretch occupies residues Met-1–Glu-86. Residues Glu-86–Thr-150 form a domain II region. The domain III, AAA+ region stretch occupies residues Ser-151 to Ala-367. Gly-195, Gly-197, Lys-198, and Thr-199 together coordinate ATP. Positions Ser-368–His-491 are domain IV, binds dsDNA.

It belongs to the DnaA family. As to quaternary structure, oligomerizes as a right-handed, spiral filament on DNA at oriC.

The protein localises to the cytoplasm. In terms of biological role, plays an essential role in the initiation and regulation of chromosomal replication. ATP-DnaA binds to the origin of replication (oriC) to initiate formation of the DNA replication initiation complex once per cell cycle. Binds the DnaA box (a 9 base pair repeat at the origin) and separates the double-stranded (ds)DNA. Forms a right-handed helical filament on oriC DNA; dsDNA binds to the exterior of the filament while single-stranded (ss)DNA is stabiized in the filament's interior. The ATP-DnaA-oriC complex binds and stabilizes one strand of the AT-rich DNA unwinding element (DUE), permitting loading of DNA polymerase. After initiation quickly degrades to an ADP-DnaA complex that is not apt for DNA replication. Binds acidic phospholipids. The protein is Chromosomal replication initiator protein DnaA of Mycobacteroides abscessus (strain ATCC 19977 / DSM 44196 / CCUG 20993 / CIP 104536 / JCM 13569 / NCTC 13031 / TMC 1543 / L948) (Mycobacterium abscessus).